Consider the following 189-residue polypeptide: Elongation factor P (189 aa).

The protein belongs to the elongation factor P family.

It localises to the cytoplasm. Its pathway is protein biosynthesis; polypeptide chain elongation. Functionally, involved in peptide bond synthesis. Stimulates efficient translation and peptide-bond synthesis on native or reconstituted 70S ribosomes in vitro. Probably functions indirectly by altering the affinity of the ribosome for aminoacyl-tRNA, thus increasing their reactivity as acceptors for peptidyl transferase. The sequence is that of Elongation factor P from Campylobacter fetus subsp. fetus (strain 82-40).